The following is a 141-amino-acid chain: Phage-like element PBSX protein XkdS (141 aa).

This sequence to B.subtilis YqbS.

This is Phage-like element PBSX protein XkdS (xkdS) from Bacillus subtilis (strain 168).